The chain runs to 262 residues: tRNA (guanine-N(1)-)-methyltransferase (262 aa).

S-adenosyl-L-methionine contacts are provided by residues Gly113 and 137–142; that span reads IGDYVL.

The protein belongs to the RNA methyltransferase TrmD family. In terms of assembly, homodimer.

It is found in the cytoplasm. The catalysed reaction is guanosine(37) in tRNA + S-adenosyl-L-methionine = N(1)-methylguanosine(37) in tRNA + S-adenosyl-L-homocysteine + H(+). In terms of biological role, specifically methylates guanosine-37 in various tRNAs. This Saccharopolyspora erythraea (strain ATCC 11635 / DSM 40517 / JCM 4748 / NBRC 13426 / NCIMB 8594 / NRRL 2338) protein is tRNA (guanine-N(1)-)-methyltransferase.